A 312-amino-acid polypeptide reads, in one-letter code: Olfactory receptor 1D5 (312 aa).

Over 1-25 the chain is Extracellular; the sequence is MDGDNQSENSQFLLLGISESPEQQQ. An N-linked (GlcNAc...) asparagine glycan is attached at Asn-5. A helical transmembrane segment spans residues 26–49; the sequence is ILFWMFLSMYLVTVLGNVLIILAI. The Cytoplasmic segment spans residues 50–57; it reads SSDSHLHT. The chain crosses the membrane as a helical span at residues 58–79; sequence PMYFFLANLSFTDLFFVTNTIP. At 80-100 the chain is on the extracellular side; the sequence is KMLVNFQSQNKAISYAGCLTQ. Residues Cys-97 and Cys-189 are joined by a disulfide bond. A helical transmembrane segment spans residues 101–120; it reads LYFLVSLVTLDNLILAVMAY. At 121-140 the chain is on the cytoplasmic side; it reads DRYVAICCPLHYVTAMSPGL. Residues 141-158 form a helical membrane-spanning segment; sequence CVLLLSLCWGLSVLYGLL. Over 159–196 the chain is Extracellular; that stretch reads LTLLLTRVTFCGPREIHYLFCDMYILLRLACSNTHIIH. Residues 197-220 traverse the membrane as a helical segment; it reads TVLVATGCFIFLTPLGFMTTSYVC. The Cytoplasmic segment spans residues 221–237; the sequence is IVRTILQIPSASKKYKA. Residues 238–260 form a helical membrane-spanning segment; the sequence is FSTCASHLGVVSLFYGTLAMVYL. Residues 261–271 lie on the Extracellular side of the membrane; the sequence is QPLHTYSMKDS. A helical membrane pass occupies residues 272 to 291; sequence VATVMYAVVTPMMNPFIYSL. Residues 292–312 are Cytoplasmic-facing; sequence RNKDMHGALGRVLRRLFQRPK.

Belongs to the G-protein coupled receptor 1 family.

It localises to the cell membrane. In terms of biological role, odorant receptor. This is Olfactory receptor 1D5 (OR1D5) from Pan paniscus (Pygmy chimpanzee).